Here is a 311-residue protein sequence, read N- to C-terminus: tRNA-cytidine(32) 2-sulfurtransferase (311 aa).

Positions 47–52 (SGGKDS) match the PP-loop motif motif. [4Fe-4S] cluster is bound by residues C122, C125, and C213.

Belongs to the TtcA family. As to quaternary structure, homodimer. It depends on Mg(2+) as a cofactor. The cofactor is [4Fe-4S] cluster.

Its subcellular location is the cytoplasm. It carries out the reaction cytidine(32) in tRNA + S-sulfanyl-L-cysteinyl-[cysteine desulfurase] + AH2 + ATP = 2-thiocytidine(32) in tRNA + L-cysteinyl-[cysteine desulfurase] + A + AMP + diphosphate + H(+). It functions in the pathway tRNA modification. Functionally, catalyzes the ATP-dependent 2-thiolation of cytidine in position 32 of tRNA, to form 2-thiocytidine (s(2)C32). The sulfur atoms are provided by the cysteine/cysteine desulfurase (IscS) system. In Salmonella choleraesuis (strain SC-B67), this protein is tRNA-cytidine(32) 2-sulfurtransferase.